The following is a 118-amino-acid chain: Sarafotoxin-i1 (118 aa).

Residues 1–23 form the signal peptide; that stretch reads MALLPRLAAGGLLLLLALAALDG. A propeptide spanning residues 24–84 is cleaved from the precursor; the sequence is KPAPPKLLQK…LSPLRKPQPL (61 aa). 2 disulfides stabilise this stretch: C85-C99 and C87-C95. Positions 112 to 118 are excised as a propeptide; it reads PSPIQSS.

Belongs to the endothelin/sarafotoxin family. In terms of processing, different length molecules ranging from 15 (85-99) to 30 amino acids (85-114) have been found in the venom. In terms of tissue distribution, expressed by the venom gland.

It localises to the secreted. Vasoconstrictor activity. These toxins cause cardiac arrest probably as a result of coronary vasospasm. Its function is as follows. Sarafotoxin-i3: vasoconstrictor activity. Causes cardiac arrest probably as a result of coronary vasospasm. Displays low agonistic activities towards endothelin-2 receptor (EDNRB) (displays affinity in the micromolar range). The sequence is that of Sarafotoxin-i1 from Atractaspis irregularis (Variable burrowing asp).